Consider the following 176-residue polypeptide: Putative L,D-transpeptidase YqjB (176 aa).

The N-terminal stretch at 1 to 25 (MRFFLCSIFMMISPIWPLGENPLPG) is a signal peptide. One can recognise a L,D-TPase catalytic domain in the interval 27 to 151 (PYVIVNKRTN…IPVGTRVLIT (125 aa)). Catalysis depends on H111, which acts as the Proton donor/acceptor. The active-site Nucleophile is C127.

Belongs to the YkuD family.

Its pathway is cell wall biogenesis; peptidoglycan biosynthesis. The chain is Putative L,D-transpeptidase YqjB (yqjB) from Bacillus subtilis (strain 168).